Reading from the N-terminus, the 234-residue chain is Large ribosomal subunit protein uL1 (234 aa).

This sequence belongs to the universal ribosomal protein uL1 family. In terms of assembly, part of the 50S ribosomal subunit.

In terms of biological role, binds directly to 23S rRNA. The L1 stalk is quite mobile in the ribosome, and is involved in E site tRNA release. Its function is as follows. Protein L1 is also a translational repressor protein, it controls the translation of the L11 operon by binding to its mRNA. The protein is Large ribosomal subunit protein uL1 of Sodalis glossinidius (strain morsitans).